Consider the following 312-residue polypeptide: UPF0725 protein At3g19520 (312 aa).

The protein belongs to the UPF0725 (EMB2204) family.

This chain is UPF0725 protein At3g19520, found in Arabidopsis thaliana (Mouse-ear cress).